Consider the following 118-residue polypeptide: Small ribosomal subunit protein uS10 (118 aa).

Position 37 is a phosphoserine (Ser-37).

Belongs to the universal ribosomal protein uS10 family. In terms of assembly, component of the small ribosomal subunit (SSU). Mature yeast ribosomes consist of a small (40S) and a large (60S) subunit. The 40S small subunit contains 1 molecule of ribosomal RNA (18S rRNA) and at least 33 different proteins. The large 60S subunit contains 3 rRNA molecules (25S, 5.8S and 5S rRNA) and at least 46 different proteins.

It localises to the cytoplasm. Functionally, component of the ribosome, a large ribonucleoprotein complex responsible for the synthesis of proteins in the cell. The small ribosomal subunit (SSU) binds messenger RNAs (mRNAs) and translates the encoded message by selecting cognate aminoacyl-transfer RNA (tRNA) molecules. The large subunit (LSU) contains the ribosomal catalytic site termed the peptidyl transferase center (PTC), which catalyzes the formation of peptide bonds, thereby polymerizing the amino acids delivered by tRNAs into a polypeptide chain. The nascent polypeptides leave the ribosome through a tunnel in the LSU and interact with protein factors that function in enzymatic processing, targeting, and the membrane insertion of nascent chains at the exit of the ribosomal tunnel. This is Small ribosomal subunit protein uS10 (rps20) from Schizosaccharomyces pombe (strain 972 / ATCC 24843) (Fission yeast).